The following is a 130-amino-acid chain: Single-stranded DNA-binding protein 1 (130 aa).

The region spanning 1–104 (MINNVVLIGR…VVAESFQILE (104 aa)) is the SSB domain. Residues 108–130 (NTANTSSLADSMPDYGPEPDLPF) are disordered.

Homotetramer.

The sequence is that of Single-stranded DNA-binding protein 1 (ssb1) from Streptococcus pyogenes serotype M18 (strain MGAS8232).